We begin with the raw amino-acid sequence, 437 residues long: Adenosylhomocysteinase (437 aa).

Residues Thr58, Asp133, and Glu158 each contribute to the substrate site. 159-161 (TTT) contacts NAD(+). Residues Lys188 and Asp192 each contribute to the substrate site. NAD(+) is bound by residues Asn193, 224–229 (GDVGKG), Glu245, 301–303 (VGH), and Asn348.

This sequence belongs to the adenosylhomocysteinase family. Homotetramer. Requires NAD(+) as cofactor.

The enzyme catalyses S-adenosyl-L-homocysteine + H2O = L-homocysteine + adenosine. Its pathway is amino-acid biosynthesis; L-homocysteine biosynthesis; L-homocysteine from S-adenosyl-L-homocysteine: step 1/1. Functionally, adenosylhomocysteine is a competitive inhibitor of S-adenosyl-L-methionine-dependent methyl transferase reactions; therefore adenosylhomocysteinase may play a key role in the control of methylations via regulation of the intracellular concentration of adenosylhomocysteine. This chain is Adenosylhomocysteinase (ahcy-1), found in Caenorhabditis elegans.